Reading from the N-terminus, the 301-residue chain is Probable enoyl-CoA hydratase 2, mitochondrial (301 aa).

The N-terminal 32 residues, 1-32 (MSFVKYLRRDNLLQLAGKPSLSRNYILQTCRT), are a transit peptide targeting the mitochondrion. Residues 105 to 109 (AGADL) and Gly-152 contribute to the substrate site.

This sequence belongs to the enoyl-CoA hydratase/isomerase family.

The protein resides in the mitochondrion. It catalyses the reaction a (3S)-3-hydroxyacyl-CoA = a (2E)-enoyl-CoA + H2O. It carries out the reaction a 4-saturated-(3S)-3-hydroxyacyl-CoA = a (3E)-enoyl-CoA + H2O. It functions in the pathway lipid metabolism; fatty acid beta-oxidation. Functionally, straight-chain enoyl-CoA thioesters from C4 up to at least C16 are processed, although with decreasing catalytic rate. The protein is Probable enoyl-CoA hydratase 2, mitochondrial of Arabidopsis thaliana (Mouse-ear cress).